The primary structure comprises 359 residues: N-acetyl-gamma-glutamyl-phosphate reductase (359 aa).

Cys162 is an active-site residue.

This sequence belongs to the NAGSA dehydrogenase family. Type 1 subfamily.

It is found in the cytoplasm. It catalyses the reaction N-acetyl-L-glutamate 5-semialdehyde + phosphate + NADP(+) = N-acetyl-L-glutamyl 5-phosphate + NADPH + H(+). It participates in amino-acid biosynthesis; L-arginine biosynthesis; N(2)-acetyl-L-ornithine from L-glutamate: step 3/4. Its function is as follows. Catalyzes the NADPH-dependent reduction of N-acetyl-5-glutamyl phosphate to yield N-acetyl-L-glutamate 5-semialdehyde. This is N-acetyl-gamma-glutamyl-phosphate reductase from Prochlorococcus marinus (strain NATL2A).